The sequence spans 85 residues: Large ribosomal subunit protein bL27 (85 aa).

Positions 1–22 (MAHKKGQGSTQNNRDSAGRRLG) are disordered.

The protein belongs to the bacterial ribosomal protein bL27 family.

This Sulfurimonas denitrificans (strain ATCC 33889 / DSM 1251) (Thiomicrospira denitrificans (strain ATCC 33889 / DSM 1251)) protein is Large ribosomal subunit protein bL27.